A 543-amino-acid polypeptide reads, in one-letter code: Ribosomal protein arginine N-methyltransferase rmt3 (543 aa).

The C2H2-type zinc-finger motif lies at 58 to 81; the sequence is FCCLFCDSTFTCLKDLWSHCKEAH. The SAM-dependent MTase PRMT-type domain occupies 217–543; sequence DSYYFESYAG…KADSQSYVLN (327 aa). Arg239, Gly263, Asp285, Ser287, Ile313, and Glu314 together coordinate S-adenosyl-L-homocysteine. Catalysis depends on residues Glu329 and Glu338.

This sequence belongs to the class I-like SAM-binding methyltransferase superfamily. Protein arginine N-methyltransferase family. As to quaternary structure, interacts with ef1a-c, rps2 and rps24. Note=Associates with the 40S ribosomal particle.

Its subcellular location is the cytoplasm. The protein resides in the cytosol. It catalyses the reaction L-arginyl-[protein] + S-adenosyl-L-methionine = N(omega)-methyl-L-arginyl-[protein] + S-adenosyl-L-homocysteine + H(+). The catalysed reaction is L-arginyl-[protein] + 2 S-adenosyl-L-methionine = N(omega),N(omega)-dimethyl-L-arginyl-[protein] + 2 S-adenosyl-L-homocysteine + 2 H(+). Its function is as follows. Methylates (mono and asymmetric dimethylation) the guanidino nitrogens of arginyl residues in ribosomal protein rps2. This chain is Ribosomal protein arginine N-methyltransferase rmt3 (rmt3), found in Schizosaccharomyces pombe (strain 972 / ATCC 24843) (Fission yeast).